Here is a 466-residue protein sequence, read N- to C-terminus: UDP-N-acetylmuramoylalanine--D-glutamate ligase (466 aa).

121–127 (GTNGKST) is an ATP binding site.

It belongs to the MurCDEF family.

It is found in the cytoplasm. It catalyses the reaction UDP-N-acetyl-alpha-D-muramoyl-L-alanine + D-glutamate + ATP = UDP-N-acetyl-alpha-D-muramoyl-L-alanyl-D-glutamate + ADP + phosphate + H(+). It functions in the pathway cell wall biogenesis; peptidoglycan biosynthesis. Its function is as follows. Cell wall formation. Catalyzes the addition of glutamate to the nucleotide precursor UDP-N-acetylmuramoyl-L-alanine (UMA). This Rhodopseudomonas palustris (strain HaA2) protein is UDP-N-acetylmuramoylalanine--D-glutamate ligase.